A 417-amino-acid chain; its full sequence is Serine hydroxymethyltransferase (417 aa).

N6-acetyllysine is present on Lys-54. Residues Leu-121 and 125-127 contribute to the (6S)-5,6,7,8-tetrahydrofolate site; that span reads GHL. At Lys-229 the chain carries N6-(pyridoxal phosphate)lysine. 3 positions are modified to N6-acetyllysine: Lys-250, Lys-285, and Lys-354. (6S)-5,6,7,8-tetrahydrofolate is bound at residue 355–357; sequence SPF. Lys-375 is subject to N6-acetyllysine.

This sequence belongs to the SHMT family. Homodimer. Requires pyridoxal 5'-phosphate as cofactor.

It is found in the cytoplasm. The enzyme catalyses (6R)-5,10-methylene-5,6,7,8-tetrahydrofolate + glycine + H2O = (6S)-5,6,7,8-tetrahydrofolate + L-serine. It participates in one-carbon metabolism; tetrahydrofolate interconversion. The protein operates within amino-acid biosynthesis; glycine biosynthesis; glycine from L-serine: step 1/1. In terms of biological role, catalyzes the reversible interconversion of serine and glycine with tetrahydrofolate (THF) serving as the one-carbon carrier. This reaction serves as the major source of one-carbon groups required for the biosynthesis of purines, thymidylate, methionine, and other important biomolecules. Also exhibits THF-independent aldolase activity toward beta-hydroxyamino acids, producing glycine and aldehydes, via a retro-aldol mechanism. The protein is Serine hydroxymethyltransferase of Escherichia coli O157:H7.